Reading from the N-terminus, the 94-residue chain is Neutrophil defensin 1 (94 aa).

The first 19 residues, 1–19 (MRTLAILAAILLVALQAQA), serve as a signal peptide directing secretion. The propeptide occupies 20–38 (EPLQARADEVAAAPEQIAA). 3 disulfide bridges follow: Cys-66/Cys-94, Cys-68/Cys-83, and Cys-73/Cys-93. An ADP-ribosylarginine; by ART1 modification is found at Arg-78. Tyr-85 is subject to Phosphotyrosine. ADP-ribosylarginine; by ART1 is present on Arg-88.

It belongs to the alpha-defensin family. In terms of assembly, tetramer. Dimer. Interacts with RETN. (Microbial infection) Interacts with HIV-1 surface protein gp120. As to quaternary structure, (Microbial infection) Interacts with herpes virus 1 (HHV1) envelope glycoprotein B; this interaction inhibits viral infection. In terms of processing, ADP-ribosylation drastically reduces cytotoxic and antibacterial activities, and enhances IL8 production. Phosphorylation at Tyr-85 has been found in some cancer cell lines, and interferes with ADP-ribosylation.

The protein localises to the secreted. Its function is as follows. Effector molecule of the innate immune system that acts via antibiotic-like properties against a broad array of infectious agents including bacteria, fungi, and viruses or by promoting the activation and maturation of some APCs. Interacts with the essential precursor of cell wall synthesis lipid II to inhibit bacterial cell wall synthesis. Inhibits adenovirus infection via inhibition of viral disassembly at the vertex region, thereby restricting the release of internal capsid protein pVI, which is required for endosomal membrane penetration during cell entry. In addition, interaction with adenovirus capsid leads to the redirection of viral particles to TLR4 thereby promoting a NLRP3-mediated inflammasome response and interleukin 1-beta (IL-1beta) release. Induces the production of proinflammatory cytokines including type I interferon (IFN) in plasmacytoid dendritic cells (pDCs) by triggering the degradation of NFKBIA and nuclear translocation of IRF1, both of which are required for activation of pDCs. In Homo sapiens (Human), this protein is Neutrophil defensin 1 (DEFA1).